Here is a 175-residue protein sequence, read N- to C-terminus: ATP-dependent protease subunit HslV (175 aa).

The active site involves threonine 2. The Na(+) site is built by glycine 158, cysteine 161, and threonine 164.

It belongs to the peptidase T1B family. HslV subfamily. In terms of assembly, a double ring-shaped homohexamer of HslV is capped on each side by a ring-shaped HslU homohexamer. The assembly of the HslU/HslV complex is dependent on binding of ATP.

It localises to the cytoplasm. It catalyses the reaction ATP-dependent cleavage of peptide bonds with broad specificity.. With respect to regulation, allosterically activated by HslU binding. Protease subunit of a proteasome-like degradation complex believed to be a general protein degrading machinery. This chain is ATP-dependent protease subunit HslV, found in Haemophilus influenzae (strain 86-028NP).